We begin with the raw amino-acid sequence, 549 residues long: Frizzled/smoothened-like sans CRD protein A (549 aa).

Residues 1–22 form the signal peptide; that stretch reads MKFNFKLILIILIINQILIINC. The Extracellular segment spans residues 23–89; it reads KENKILEIYK…EVNTLSLMIK (67 aa). The N-linked (GlcNAc...) asparagine glycan is linked to asparagine 63. The chain crosses the membrane as a helical span at residues 90 to 110; it reads ITGTISFIASLILLLIYSPLI. The Cytoplasmic portion of the chain corresponds to 111-119; it reads NRMGYNRHT. Residues 120–140 form a helical membrane-spanning segment; sequence IGIFFLTFSVFLIMLTDIIYV. Residues 141–162 lie on the Extracellular side of the membrane; that stretch reads HHGNDLICPQSHRYSRQNDSGC. The N-linked (GlcNAc...) asparagine glycan is linked to asparagine 158. Residues 163 to 183 traverse the membrane as a helical segment; sequence TITGILFQYGCIAAVLFWATL. The Cytoplasmic segment spans residues 184–198; sequence SLDLYLTLKKISTKK. A helical membrane pass occupies residues 199–219; the sequence is VEKWYLIILTLIALILTFVPL. The Extracellular segment spans residues 220–241; that stretch reads VKKSYGYLVTGLACWILDSTDQ. A helical transmembrane segment spans residues 242–262; it reads IIFFWAPFTAILGIGSILIVL. Residues 263–287 lie on the Cytoplasmic side of the membrane; the sequence is VVYEIYKISKITKQNRGIFQSHIRP. The chain crosses the membrane as a helical span at residues 288–308; it reads LLMVLFIFGQFLFILAFNALI. The Extracellular segment spans residues 309–346; it reads NNKYDEYSARMDSYIDCLFSSSSYSYLCRLKTFPFEME. Residues 347–367 form a helical membrane-spanning segment; the sequence is FIVLFFLRLIGIEVLIFYGFT. Residues 368–549 lie on the Cytoplasmic side of the membrane; it reads QQTKKILLHS…NNNSNNDENN (182 aa). Low complexity-rich tracts occupy residues 417-474 and 536-549; these read NNNN…SQQN and NKNINNNSNNDENN. 2 disordered regions span residues 417 to 483 and 528 to 549; these read NNNN…QKLS and QYEEDEINNKNINNNSNNDENN. Residues 432-475 are a coiled coil; the sequence is NNLNNNLNNNNLNNNNNLNNLNNLNINNNLKNSQNNLNNSQQNE.

This sequence belongs to the G-protein coupled receptor Fz/Smo family.

It localises to the membrane. The polypeptide is Frizzled/smoothened-like sans CRD protein A (fscA) (Dictyostelium discoideum (Social amoeba)).